The following is a 114-amino-acid chain: Putative cysteine proteinase inhibitor 9 (114 aa).

Positions 1–23 (MRTSSLVLFAAVAVFGAACTAAA) are cleaved as a signal peptide.

This sequence belongs to the cystatin family. Phytocystatin subfamily.

The protein resides in the secreted. Functionally, specific inhibitor of cysteine proteinases. Probably involved in the regulation of endogenous processes and in defense against pests and pathogens. The protein is Putative cysteine proteinase inhibitor 9 of Oryza sativa subsp. japonica (Rice).